A 105-amino-acid polypeptide reads, in one-letter code: Vacuolar ATPase assembly integral membrane protein VMA21 homolog (105 aa).

The disordered stretch occupies residues 1–26 (MSTKNKKAAGGNGVAPKQTRQQSHDS). Residues 1-36 (MSTKNKKAAGGNGVAPKQTRQQSHDSQDYSSFKTVL) are Cytoplasmic-facing. A helical membrane pass occupies residues 37 to 57 (FYCMLIVFLPVLTFFVLKGFV). The Lumenal segment spans residues 58–68 (LDQFLDISEVK). The chain crosses the membrane as a helical span at residues 69-89 (VNIASAVGAVVALHIALGLYI). Residues 90-105 (YRAYFGAPGSKGSKTD) lie on the Cytoplasmic side of the membrane.

This sequence belongs to the VMA21 family.

The protein resides in the endoplasmic reticulum membrane. It is found in the endoplasmic reticulum-Golgi intermediate compartment membrane. Its subcellular location is the cytoplasmic vesicle. It localises to the COPII-coated vesicle membrane. In terms of biological role, required for the assembly of the V0 complex of the vacuolar ATPase (V-ATPase) in the endoplasmic reticulum. The polypeptide is Vacuolar ATPase assembly integral membrane protein VMA21 homolog (Drosophila melanogaster (Fruit fly)).